A 556-amino-acid polypeptide reads, in one-letter code: 2-succinyl-5-enolpyruvyl-6-hydroxy-3-cyclohexene-1-carboxylate synthase (556 aa).

The protein belongs to the TPP enzyme family. MenD subfamily. Homodimer. Mg(2+) serves as cofactor. It depends on Mn(2+) as a cofactor. The cofactor is thiamine diphosphate.

The catalysed reaction is isochorismate + 2-oxoglutarate + H(+) = 5-enolpyruvoyl-6-hydroxy-2-succinyl-cyclohex-3-ene-1-carboxylate + CO2. The protein operates within quinol/quinone metabolism; 1,4-dihydroxy-2-naphthoate biosynthesis; 1,4-dihydroxy-2-naphthoate from chorismate: step 2/7. It functions in the pathway quinol/quinone metabolism; menaquinone biosynthesis. In terms of biological role, catalyzes the thiamine diphosphate-dependent decarboxylation of 2-oxoglutarate and the subsequent addition of the resulting succinic semialdehyde-thiamine pyrophosphate anion to isochorismate to yield 2-succinyl-5-enolpyruvyl-6-hydroxy-3-cyclohexene-1-carboxylate (SEPHCHC). The sequence is that of 2-succinyl-5-enolpyruvyl-6-hydroxy-3-cyclohexene-1-carboxylate synthase from Salmonella arizonae (strain ATCC BAA-731 / CDC346-86 / RSK2980).